Here is a 219-residue protein sequence, read N- to C-terminus: Thiamine-phosphate synthase (219 aa).

Residues 44-48 (QFREK) and Asn79 contribute to the 4-amino-2-methyl-5-(diphosphooxymethyl)pyrimidine site. Mg(2+) is bound by residues Asp80 and Asp99. Residue Ser117 participates in 4-amino-2-methyl-5-(diphosphooxymethyl)pyrimidine binding. 143 to 145 (TST) lines the 2-[(2R,5Z)-2-carboxy-4-methylthiazol-5(2H)-ylidene]ethyl phosphate pocket. Lys146 serves as a coordination point for 4-amino-2-methyl-5-(diphosphooxymethyl)pyrimidine. 2-[(2R,5Z)-2-carboxy-4-methylthiazol-5(2H)-ylidene]ethyl phosphate-binding positions include Gly175 and 195 to 196 (IS).

This sequence belongs to the thiamine-phosphate synthase family. The cofactor is Mg(2+).

It catalyses the reaction 2-[(2R,5Z)-2-carboxy-4-methylthiazol-5(2H)-ylidene]ethyl phosphate + 4-amino-2-methyl-5-(diphosphooxymethyl)pyrimidine + 2 H(+) = thiamine phosphate + CO2 + diphosphate. The catalysed reaction is 2-(2-carboxy-4-methylthiazol-5-yl)ethyl phosphate + 4-amino-2-methyl-5-(diphosphooxymethyl)pyrimidine + 2 H(+) = thiamine phosphate + CO2 + diphosphate. It carries out the reaction 4-methyl-5-(2-phosphooxyethyl)-thiazole + 4-amino-2-methyl-5-(diphosphooxymethyl)pyrimidine + H(+) = thiamine phosphate + diphosphate. It functions in the pathway cofactor biosynthesis; thiamine diphosphate biosynthesis; thiamine phosphate from 4-amino-2-methyl-5-diphosphomethylpyrimidine and 4-methyl-5-(2-phosphoethyl)-thiazole: step 1/1. In terms of biological role, condenses 4-methyl-5-(beta-hydroxyethyl)thiazole monophosphate (THZ-P) and 2-methyl-4-amino-5-hydroxymethyl pyrimidine pyrophosphate (HMP-PP) to form thiamine monophosphate (TMP). In Bacillus cereus (strain AH187), this protein is Thiamine-phosphate synthase.